The sequence spans 166 residues: Early E3 18.5 kDa glycoprotein (166 aa).

A signal peptide spans 1-19; sequence MGPILVLLVLLSLLEPGSA. The Lumenal portion of the chain corresponds to 20 to 131; that stretch reads NYDPCLDFDP…SKDNIVTFSI (112 aa). N-linked (GlcNAc...) asparagine; by host glycosylation is present at asparagine 31. 2 disulfide bridges follow: cysteine 32–cysteine 50 and cysteine 44–cysteine 106. N-linked (GlcNAc...) asparagine; by host glycans are attached at residues asparagine 63, asparagine 67, and asparagine 97. The chain crosses the membrane as a helical span at residues 132 to 152; it reads AYCLCACLLTALLCVCIHLLV. Residues 153-166 lie on the Cytoplasmic side of the membrane; it reads TTRIKNANNKEKMP. Residues 162 to 166 carry the Di-lysine motif motif; the sequence is KEKMP.

The protein belongs to the adenoviridae E19 family. Post-translationally, both disulfide bonds are absolutely critical for the interaction with MHC antigens. In terms of processing, N-glycosylated; high-mannose.

The protein localises to the host endoplasmic reticulum membrane. Functionally, binds and retains class I heavy chains in the endoplasmic reticulum during the early period of virus infection, thereby impairing their transport to the cell surface. Also delays the expression of class I alleles that it cannot affect by direct retention. Binds transporters associated with antigen processing (TAP) and acts as a tapasin inhibitor, preventing class I/TAP association. In consequence, infected cells are masked for immune recognition by cytotoxic T-lymphocytes. This is Early E3 18.5 kDa glycoprotein from Human adenovirus B serotype 11 (strain Slobiski) (HAdV-11).